Reading from the N-terminus, the 350-residue chain is CMP-N-acetylneuraminate-beta-galactosamide-alpha-2,3-sialyltransferase 2 (350 aa).

The Cytoplasmic segment spans residues 1-6 (MKCSLR). Residues 7 to 27 (VWFLSMAFLLVFIMSLLFTYS) form a helical; Signal-anchor for type II membrane protein membrane-spanning segment. At 28–350 (HHSMATLPYL…ASKIEVYRGN (323 aa)) the chain is on the lumenal side. Cystine bridges form between cysteine 70–cysteine 75, cysteine 72–cysteine 149, and cysteine 152–cysteine 291. Substrate contacts are provided by glutamine 116, asparagine 157, and asparagine 180. Asparagine 211 carries N-linked (GlcNAc...) asparagine glycosylation. Positions 240, 276, 280, 300, 309, and 326 each coordinate substrate.

It belongs to the glycosyltransferase 29 family. As to quaternary structure, homodimer; disulfide-linked. Homodimer formation occurs in the endoplasmic reticulum. Post-translationally, the soluble form derives from the membrane form by proteolytic processing. In terms of processing, N-glycosylated; necessary for proper exit from endoplasmic reticulum and trafficking to the Golgi apparatus.

Its subcellular location is the golgi apparatus. It is found in the golgi stack membrane. It localises to the secreted. It catalyses the reaction a beta-D-galactosyl-(1-&gt;3)-N-acetyl-alpha-D-galactosaminyl derivative + CMP-N-acetyl-beta-neuraminate = an N-acetyl-alpha-neuraminyl-(2-&gt;3)-beta-D-galactosyl-(1-&gt;3)-N-acetyl-alpha-D-galactosaminyl derivative + CMP + H(+). The enzyme catalyses a ganglioside GM1 (d18:1(4E)) + CMP-N-acetyl-beta-neuraminate = a ganglioside GD1a (d18:1(4E)) + CMP + H(+). The catalysed reaction is ganglioside GM1 (d18:1(4E)/18:0) + CMP-N-acetyl-beta-neuraminate = ganglioside GD1a (18:1(4E)/18:0) + CMP + H(+). It carries out the reaction a ganglioside GA1 + CMP-N-acetyl-beta-neuraminate = a ganglioside GM1b + CMP + H(+). It catalyses the reaction a ganglioside GA1 (d18:1(4E)) + CMP-N-acetyl-beta-neuraminate = a ganglioside GM1b (d18:1(4E)) + CMP + H(+). The enzyme catalyses a globoside GalGb4Cer + CMP-N-acetyl-beta-neuraminate = a globoside MSGG + CMP + H(+). It participates in protein modification; protein glycosylation. Its pathway is glycolipid biosynthesis. A beta-galactoside alpha2-3 sialyltransferase primarily involved in terminal sialylation of ganglio and globo series glycolipids. Catalyzes the transfer of sialic acid (N-acetyl-neuraminic acid; Neu5Ac) from the nucleotide sugar donor CMP-Neu5Ac onto acceptor Galbeta-(1-&gt;3)-GalNAc-terminated glycoconjugates through an alpha2-3 linkage. Sialylates GM1/GM1a, GA1/asialo-GM1 gangliosides to form GD1a and GM1b, respectively. Together with ST3GAL3, primarily responsible for biosynthesis of brain gangliosides that function as ligand for myelin-associated glycoprotein MAG on axons, regulating MAG expression and axonal myelin stability and regeneration. Responsible for the sialylation of the pluripotent stem cell- and cancer stem cell-associated antigen SSEA3, forming SSEA4. Sialylates with low efficiency asialofetuin, presumably onto O-glycosidically linked Galbeta-(1-&gt;3)-GalNAc-O-Ser. The sequence is that of CMP-N-acetylneuraminate-beta-galactosamide-alpha-2,3-sialyltransferase 2 (St3gal2) from Rattus norvegicus (Rat).